We begin with the raw amino-acid sequence, 422 residues long: Zinc finger protein zfp-2 (422 aa).

The interval 95 to 119 is disordered; that stretch reads AIPCTSSSMQPSTSSNPSSGEHQPV. Residues 99-113 are compositionally biased toward low complexity; it reads TSSSMQPSTSSNPSS. 7 C2H2-type zinc fingers span residues 171–194, 200–222, 229–251, 255–278, 300–322, 328–350, and 356–379; these read YRCTNCKTYFGNKEVYQRHIQEVH, FRCFNCGMRFANKTSMTHHLKDH, FSCDYCPRIFSKLESKTRHHKMH, STCQTCMRFFTTEDALRHHQSTAH, YSCSYCNLRFHFKKDMLVHERIH, YSCGYCMKSFAQSQALTAHIRTH, and YGCGKCDKRFRDNSCLRKHELAAH.

As to expression, expressed in vulval cells and all somatic gonad structures such as spermatheca, sheath cells, uterine cells and distal tip cells.

Its subcellular location is the nucleus. Probable zinc finger transcription factor that acts as a transcriptional repressor. Acts redundantly with the transcriptional repressor lin-35 to control the development of somatic gonad lineages. May, in addition, suppress sensitivity to RNAi. The protein is Zinc finger protein zfp-2 of Caenorhabditis elegans.